A 427-amino-acid chain; its full sequence is Peptidase B (427 aa).

Mn(2+) is bound by residues Lys195 and Asp200. The active site involves Lys207. 3 residues coordinate Mn(2+): Asp218, Asp277, and Glu279. Arg281 is a catalytic residue.

The protein belongs to the peptidase M17 family. Homohexamer. Mn(2+) serves as cofactor.

It is found in the cytoplasm. It carries out the reaction Release of an N-terminal amino acid, Xaa, from a peptide or arylamide. Xaa is preferably Glu or Asp but may be other amino acids, including Leu, Met, His, Cys and Gln.. Probably plays an important role in intracellular peptide degradation. The protein is Peptidase B of Escherichia coli (strain ATCC 8739 / DSM 1576 / NBRC 3972 / NCIMB 8545 / WDCM 00012 / Crooks).